The primary structure comprises 668 residues: DNA ligase (668 aa).

NAD(+)-binding positions include 37-41 (DNVYD), 86-87 (SM), and Glu116. The active-site N6-AMP-lysine intermediate is the Lys118. NAD(+) is bound by residues Arg139, Glu173, Lys288, and Lys312. Residues Cys406, Cys409, Cys424, and Cys429 each coordinate Zn(2+). Positions 591 to 668 (APDNPFKDKT…TEEEAIAQIE (78 aa)) constitute a BRCT domain.

This sequence belongs to the NAD-dependent DNA ligase family. LigA subfamily. Mg(2+) is required as a cofactor. It depends on Mn(2+) as a cofactor.

It catalyses the reaction NAD(+) + (deoxyribonucleotide)n-3'-hydroxyl + 5'-phospho-(deoxyribonucleotide)m = (deoxyribonucleotide)n+m + AMP + beta-nicotinamide D-nucleotide.. In terms of biological role, DNA ligase that catalyzes the formation of phosphodiester linkages between 5'-phosphoryl and 3'-hydroxyl groups in double-stranded DNA using NAD as a coenzyme and as the energy source for the reaction. It is essential for DNA replication and repair of damaged DNA. In Lactobacillus helveticus (strain DPC 4571), this protein is DNA ligase.